Consider the following 361-residue polypeptide: Histidinol-phosphate aminotransferase (361 aa).

Lysine 219 bears the N6-(pyridoxal phosphate)lysine mark.

It belongs to the class-II pyridoxal-phosphate-dependent aminotransferase family. Histidinol-phosphate aminotransferase subfamily. As to quaternary structure, homodimer. It depends on pyridoxal 5'-phosphate as a cofactor.

The enzyme catalyses L-histidinol phosphate + 2-oxoglutarate = 3-(imidazol-4-yl)-2-oxopropyl phosphate + L-glutamate. Its pathway is amino-acid biosynthesis; L-histidine biosynthesis; L-histidine from 5-phospho-alpha-D-ribose 1-diphosphate: step 7/9. The polypeptide is Histidinol-phosphate aminotransferase (Acinetobacter baumannii (strain SDF)).